A 263-amino-acid polypeptide reads, in one-letter code: Aquaglyceroporin (263 aa).

Residues 1-22 (MDQFVFSGGSEGGGELGGDRER) form a disordered region. A run of 6 helical transmembrane segments spans residues 41–61 (KYFC…FGLA), 64–84 (GGAQ…ITLF), 113–133 (LCYV…GYGI), 157–177 (VIPT…YGVM), 180–200 (LTVP…GATM), and 222–242 (VAAL…AFLG).

Belongs to the MIP/aquaporin (TC 1.A.8) family. In terms of assembly, multimer.

The protein localises to the vacuole membrane. The catalysed reaction is H2O(in) = H2O(out). It catalyses the reaction glycerol(in) = glycerol(out). The enzyme catalyses urea(in) = urea(out). Mediates water and glycerol transport across cell membranes. Permeable to selected sugar alcohols of up to five carbons and urea. Permeable to methylamine/methylammonium. The sequence is that of Aquaglyceroporin from Toxoplasma gondii (strain ATCC 50611 / Me49).